The chain runs to 795 residues: Phenylalanine--tRNA ligase beta subunit (795 aa).

One can recognise a tRNA-binding domain in the interval 39 to 148; it reads AGRFTGVVVG…AEAPIGQDIR (110 aa). A B5 domain is found at 401 to 476; the sequence is PQPATITLRR…RVYGYDAIPN (76 aa). Residues D454, D460, E463, and E464 each coordinate Mg(2+). The FDX-ACB domain occupies 701-794; that stretch reads SRFPANRRDI…LKQRFQASLR (94 aa).

The protein belongs to the phenylalanyl-tRNA synthetase beta subunit family. Type 1 subfamily. In terms of assembly, tetramer of two alpha and two beta subunits. Mg(2+) is required as a cofactor.

Its subcellular location is the cytoplasm. The catalysed reaction is tRNA(Phe) + L-phenylalanine + ATP = L-phenylalanyl-tRNA(Phe) + AMP + diphosphate + H(+). This is Phenylalanine--tRNA ligase beta subunit from Sodalis glossinidius (strain morsitans).